Reading from the N-terminus, the 270-residue chain is Purine nucleoside phosphorylase BT_4389 (270 aa).

His79, Cys124, and His141 together coordinate Zn(2+).

This sequence belongs to the purine nucleoside phosphorylase YfiH/LACC1 family. As to quaternary structure, homodimer. Cu(2+) is required as a cofactor. The cofactor is Zn(2+).

The enzyme catalyses adenosine + phosphate = alpha-D-ribose 1-phosphate + adenine. It catalyses the reaction S-methyl-5'-thioadenosine + phosphate = 5-(methylsulfanyl)-alpha-D-ribose 1-phosphate + adenine. It carries out the reaction inosine + phosphate = alpha-D-ribose 1-phosphate + hypoxanthine. The catalysed reaction is adenosine + H2O + H(+) = inosine + NH4(+). Purine nucleoside enzyme that catalyzes the phosphorolysis of adenosine and inosine nucleosides, yielding D-ribose 1-phosphate and the respective free bases, adenine and hypoxanthine. Also catalyzes the phosphorolysis of S-methyl-5'-thioadenosine into adenine and S-methyl-5-thio-alpha-D-ribose 1-phosphate. Also has adenosine deaminase activity. The sequence is that of Purine nucleoside phosphorylase BT_4389 from Bacteroides thetaiotaomicron (strain ATCC 29148 / DSM 2079 / JCM 5827 / CCUG 10774 / NCTC 10582 / VPI-5482 / E50).